Reading from the N-terminus, the 281-residue chain is Bifunctional protein FolD (281 aa).

NADP(+)-binding positions include 164–166 (GAS), Ile-189, and Ile-230.

It belongs to the tetrahydrofolate dehydrogenase/cyclohydrolase family. In terms of assembly, homodimer.

It carries out the reaction (6R)-5,10-methylene-5,6,7,8-tetrahydrofolate + NADP(+) = (6R)-5,10-methenyltetrahydrofolate + NADPH. The catalysed reaction is (6R)-5,10-methenyltetrahydrofolate + H2O = (6R)-10-formyltetrahydrofolate + H(+). Its pathway is one-carbon metabolism; tetrahydrofolate interconversion. Catalyzes the oxidation of 5,10-methylenetetrahydrofolate to 5,10-methenyltetrahydrofolate and then the hydrolysis of 5,10-methenyltetrahydrofolate to 10-formyltetrahydrofolate. This is Bifunctional protein FolD from Sulfurovum sp. (strain NBC37-1).